A 338-amino-acid chain; its full sequence is Phenylalanine--tRNA ligase alpha subunit (338 aa).

Residue glutamate 253 participates in Mg(2+) binding.

It belongs to the class-II aminoacyl-tRNA synthetase family. Phe-tRNA synthetase alpha subunit type 1 subfamily. Tetramer of two alpha and two beta subunits. Mg(2+) serves as cofactor.

The protein localises to the cytoplasm. It carries out the reaction tRNA(Phe) + L-phenylalanine + ATP = L-phenylalanyl-tRNA(Phe) + AMP + diphosphate + H(+). The sequence is that of Phenylalanine--tRNA ligase alpha subunit from Syntrophotalea carbinolica (strain DSM 2380 / NBRC 103641 / GraBd1) (Pelobacter carbinolicus).